The chain runs to 533 residues: Heterogeneous nuclear ribonucleoprotein Q (533 aa).

Position 2 is an N-acetylalanine (Ala2). Ser69 bears the Phosphoserine mark. 3 RRM domains span residues 72 to 151, 153 to 235, and 248 to 318; these read TEIF…ISVA, NRLF…WADP, and KVLF…FAKP. Lys78 is covalently cross-linked (Glycyl lysine isopeptide (Lys-Gly) (interchain with G-Cter in SUMO2)). Lys131 carries the post-translational modification N6-acetyllysine. Position 273 is an N6-acetyllysine (Lys273). A Phosphotyrosine modification is found at Tyr283. Residues 310 to 471 are interaction with APOBEC1; it reads NIEIVFAKPP…GARGGRGGNV (162 aa). Arg354 carries the asymmetric dimethylarginine; by PRMT1; alternate modification. An Omega-N-methylarginine; by PRMT1; alternate modification is found at Arg354. 6 repeat units span residues 358–360, 361–363, 370–374, 379–382, 388–390, and 395–398. The 8 X 3 AA repeats of R-G-G stretch occupies residues 358–469; it reads RGGRGGYGYP…VRGARGGRGG (112 aa). A 3 X 4 AA repeats of Y-Y-G-Y region spans residues 370 to 398; sequence YYGYEDYYDYYGYDYHNYRGGYEDPYYGY. The residue at position 406 (Arg406) is an Omega-N-methylarginine; by PRMT1. The interval 407 to 533 is disordered; that stretch reads GRGGRGARGA…YQDTFGQQWK (127 aa). Residues 408 to 410 form a 1-4 repeat; the sequence is RGG. The segment covering 414 to 432 has biased composition (low complexity); that stretch reads RGAAPSRGRGAAPPRGRAG. Arg420 is modified (asymmetric dimethylarginine; by PRMT1). Asymmetric dimethylarginine; by PRMT1; alternate is present on Arg428. Position 428 is an omega-N-methylarginine; by PRMT1; alternate (Arg428). The interval 428 to 459 is interaction with SMN; the sequence is RGRAGYSQRGGPGSARGVRGARGGAQQQRGRG. An Asymmetric dimethylarginine; alternate modification is found at Arg436. Arg436 carries the post-translational modification Omega-N-methylarginine; alternate. One copy of the 1-5 repeat lies at 436–438; it reads RGG. An asymmetric dimethylarginine; by PRMT1; alternate mark is found at Arg446 and Arg449. 2 positions are modified to omega-N-methylarginine; by PRMT1; alternate: Arg446 and Arg449. Tandem repeats lie at residues 449 to 451, 464 to 466, and 467 to 469. The span at 460–472 shows a compositional bias: gly residues; sequence VRGARGGRGGNVG. Residues 474 to 488 carry the Bipartite nuclear localization signal motif; it reads KRKADGYNQPDSKRR. Polar residues predominate over residues 490–505; it reads TNNQNWGSQPIAQQPL. Ser497 carries the post-translational modification Phosphoserine. Residue Lys517 forms a Glycyl lysine isopeptide (Lys-Gly) (interchain with G-Cter in SUMO2) linkage.

As to quaternary structure, identified in a histone pre-mRNA complex, at least composed of ERI1, LSM11, SLBP, SNRPB, SYNCRIP and YBX1. Identified in the spliceosome C complex. Component of the coding region determinant (CRD)-mediated complex, composed of DHX9, HNRNPU, IGF2BP1, SYNCRIP and YBX1. Identified in a mRNP complex, at least composed of DHX9, DDX3X, ELAVL1, HNRNPU, IGF2BP1, ILF3, PABPC1, PCBP2, PTBP2, STAU1, STAU2, SYNCRIP and YBX1. Identified in a mRNP granule complex, at least composed of ACTB, ACTN4, DHX9, ERG, HNRNPA1, HNRNPA2B1, HNRNPAB, HNRNPD, HNRNPL, HNRNPR, HNRNPU, HSPA1, HSPA8, IGF2BP1, ILF2, ILF3, NCBP1, NCL, PABPC1, PABPC4, PABPN1, RPLP0, RPS3, RPS3A, RPS4X, RPS8, RPS9, SYNCRIP, YBX1 and untranslated mRNAs. Component of the APOB mRNA editosome. Interacts with APOBEC1 and A1CF. Part of a complex associated with the FOS mCRD domain and consisting of PABPC1, PAIP1, CSDE1/UNR, HNRPD and SYNCRIP. Interacts with HNRPR, SMN, POLR2A hyperphosphorylated C-terminal domain, minute virus of mice (MVM) NS1 protein and through its C-terminal domain with SYT7, SYT8 and SYT9. The non-phosphorylated and phosphorylated forms are colocalized with PAIP1 in polysomes. Interacts with GTPBP1. Interacts with HABP4. Post-translationally, phosphorylated on tyrosine. The membrane-bound form found in microsomes is phosphorylated in vitro by insulin receptor tyrosine kinase (INSR). Phosphorylation is inhibited upon binding to RNA, whereas the cytoplasmic form is poorly phosphorylated.

It is found in the nucleus. It localises to the nucleoplasm. The protein resides in the cytoplasm. The protein localises to the microsome. In terms of biological role, heterogenous nuclear ribonucleoprotein (hnRNP) implicated in mRNA processing mechanisms. Component of the CRD-mediated complex that promotes MYC mRNA stability. Is associated in vitro with pre-mRNA, splicing intermediates and mature mRNA protein complexes. Binds to apoB mRNA AU-rich sequences. Part of the APOB mRNA editosome complex and may modulate the postranscriptional C to U RNA-editing of the APOB mRNA through either by binding to A1CF (APOBEC1 complementation factor), to APOBEC1 or to RNA itself. May be involved in translationally coupled mRNA turnover. Implicated with other RNA-binding proteins in the cytoplasmic deadenylation/translational and decay interplay of the FOS mRNA mediated by the major coding-region determinant of instability (mCRD) domain. Interacts in vitro preferentially with poly(A) and poly(U) RNA sequences. May be involved in cytoplasmic vesicle-based mRNA transport through interaction with synaptotagmins. The chain is Heterogeneous nuclear ribonucleoprotein Q (Syncrip) from Rattus norvegicus (Rat).